A 499-amino-acid polypeptide reads, in one-letter code: MTEIRLTNTKSRRKEAFEPIDRKNVRLYVCGPTVYDRAHLGNGRPVVVFDVLFRLLRHVYGEGHVTYVRNFTDVDDKINAAALARKDAGDPRSLEALIRERTDETIRWYHEDMDALGALRPTHEPRATEWIGAMIAMIEDLIAKGHAYEREGHVLFRVRSYRDYGALSGRSVDDMIAGARVEVAPFKEDPMDFVLWKPSDDELPGWDSPWGRGRPGWHIECSAMSYELLGATFDIHAGGIDLQFPHHENEIAQSCCAHPEGGFARVWMHNEMLLVDGRKMSKSLGNFFTVRDLLDQGWPGEVIRMVYLGTHYGRPMDWTAEKAEQAKTTLRNWAEMVEGAAPGEVRAEVVDPLSDDLNTAGALAALSDLYKRKDAAGLLGSAHLLGVDLQAIRHQPWARPYAFEELDGRFLREGIDYQPTVGVIGWGEITDQARETSIGLLHRWLALRRAGDFETADRLKTDAMRLGVELRAQKSPNGVTGGLAKLADRVDVSALEGLL.

Cysteine 30 is a Zn(2+) binding site. Residues 32 to 42 carry the 'HIGH' region motif; the sequence is PTVYDRAHLGN. Zn(2+) is bound by residues cysteine 221, histidine 246, and glutamate 250. Residues 279–283 carry the 'KMSKS' region motif; it reads KMSKS. Residue lysine 282 coordinates ATP.

This sequence belongs to the class-I aminoacyl-tRNA synthetase family. Monomer. It depends on Zn(2+) as a cofactor.

The protein resides in the cytoplasm. It catalyses the reaction tRNA(Cys) + L-cysteine + ATP = L-cysteinyl-tRNA(Cys) + AMP + diphosphate. The polypeptide is Cysteine--tRNA ligase (Cereibacter sphaeroides (strain ATCC 17023 / DSM 158 / JCM 6121 / CCUG 31486 / LMG 2827 / NBRC 12203 / NCIMB 8253 / ATH 2.4.1.) (Rhodobacter sphaeroides)).